A 244-amino-acid chain; its full sequence is DNA repair protein RecO (244 aa).

Belongs to the RecO family.

Involved in DNA repair and RecF pathway recombination. The polypeptide is DNA repair protein RecO (Caldicellulosiruptor saccharolyticus (strain ATCC 43494 / DSM 8903 / Tp8T 6331)).